We begin with the raw amino-acid sequence, 586 residues long: Alpha-1,2-mannosyltransferase MNN5 (586 aa).

Residues 1 to 29 form the signal peptide; sequence MLIRLKKRKILQVIVSAVVLILFFCSVHN. Asn113, Asn136, Asn259, and Asn264 each carry an N-linked (GlcNAc...) asparagine glycan.

The protein belongs to the MNN1/MNT family. In terms of assembly, interacts with SVP26. Glycosylated.

Its subcellular location is the golgi apparatus. The protein localises to the cis-Golgi network. It participates in protein modification; protein glycosylation. In terms of biological role, responsible for addition of first and second mannose residues to the outer chain of core N-linked polysaccharides and to O-linked mannotriose. Implicated in late Golgi modifications. The protein is Alpha-1,2-mannosyltransferase MNN5 (MNN5) of Saccharomyces cerevisiae (strain ATCC 204508 / S288c) (Baker's yeast).